Consider the following 235-residue polypeptide: Dephospho-CoA kinase (235 aa).

The DPCK domain occupies 15-219; that stretch reads NVGLTGSISC…KKERLQRKSA (205 aa). ATP is bound at residue 23 to 28; it reads SCGKST.

The protein belongs to the CoaE family.

The protein localises to the cytoplasm. The catalysed reaction is 3'-dephospho-CoA + ATP = ADP + CoA + H(+). The protein operates within cofactor biosynthesis; coenzyme A biosynthesis; CoA from (R)-pantothenate: step 5/5. Catalyzes the phosphorylation of the 3'-hydroxyl group of dephosphocoenzyme A to form coenzyme A. This chain is Dephospho-CoA kinase, found in Syntrophus aciditrophicus (strain SB).